A 211-amino-acid polypeptide reads, in one-letter code: ATP phosphoribosyltransferase (211 aa).

It belongs to the ATP phosphoribosyltransferase family. Short subfamily. In terms of assembly, heteromultimer composed of HisG and HisZ subunits.

It is found in the cytoplasm. The enzyme catalyses 1-(5-phospho-beta-D-ribosyl)-ATP + diphosphate = 5-phospho-alpha-D-ribose 1-diphosphate + ATP. It participates in amino-acid biosynthesis; L-histidine biosynthesis; L-histidine from 5-phospho-alpha-D-ribose 1-diphosphate: step 1/9. Its function is as follows. Catalyzes the condensation of ATP and 5-phosphoribose 1-diphosphate to form N'-(5'-phosphoribosyl)-ATP (PR-ATP). Has a crucial role in the pathway because the rate of histidine biosynthesis seems to be controlled primarily by regulation of HisG enzymatic activity. This is ATP phosphoribosyltransferase from Pseudomonas paraeruginosa (strain DSM 24068 / PA7) (Pseudomonas aeruginosa (strain PA7)).